The primary structure comprises 331 residues: Endo-1,4-beta-xylanase 2 (331 aa).

The N-terminal stretch at 1 to 17 is a signal peptide; it reads MKASSVLLGLAPLAALA. In terms of domain architecture, GH10 spans 31-329; sequence QQSIDALMKA…KPAYNSVVQA (299 aa). N105 carries an N-linked (GlcNAc...) asparagine glycan. E159 acts as the Proton donor in catalysis. E266 serves as the catalytic Nucleophile. C284 and C290 are joined by a disulfide. Residue N301 is glycosylated (N-linked (GlcNAc...) asparagine).

This sequence belongs to the glycosyl hydrolase 10 (cellulase F) family.

Its subcellular location is the secreted. It carries out the reaction Endohydrolysis of (1-&gt;4)-beta-D-xylosidic linkages in xylans.. It participates in glycan degradation; xylan degradation. Functionally, endo-1,4-beta-xylanase involved in the hydrolysis of xylan, a major structural heterogeneous polysaccharide found in plant biomass representing the second most abundant polysaccharide in the biosphere, after cellulose. Accounts for approximately 70 percent of the endoxylanase activity in the culture filtrate. The protein is Endo-1,4-beta-xylanase 2 (XYL2) of Pyricularia grisea (Crabgrass-specific blast fungus).